A 404-amino-acid polypeptide reads, in one-letter code: O-methyltransferase GME11366 (404 aa).

S-adenosyl-L-methionine contacts are provided by residues 237–238, Asp262, Arg301, and Arg302; that span reads GG. His305 acts as the Proton acceptor in catalysis.

The protein belongs to the class I-like SAM-binding methyltransferase superfamily. Cation-independent O-methyltransferase family.

The protein operates within secondary metabolite biosynthesis. In terms of biological role, O-methyltransferase; part of the gene cluster that mediates the biosynthesis of dibenzodioxocinones such as pestalotiollide B, a novel class of inhibitors against cholesterol ester transfer protein (CEPT). The biosynthesis initiates from condensation of acetate and malonate units catalyzed by the non-reducing PKS pks8/GME11356. Pks8/GME11356 lacks a thioesterase (TE) domain, which is important to the cyclizing of the third ring of atrochrysone carboxylic acid, and the esterase GME11355 might play the role of TE and catalyzes the cyclization reaction of the C ring. The lactamase-like protein GME11357 (or other beta-lactamases in Pestalotiopsis microspora) probably hydrolyzes the thioester bond between the ACP of pks8/GME11356 and the intermediate to release atrochrysone carboxylic acid, which is spontaneously dehydrates to form endocrocin anthrone. Endocrocin anthrone is further converted to emodin via the endocrocin intermediate. Emodin is then oxidized by several enzymes such as the Baeyer-Villiger oxidase GME11358, the oxidoreductase GME11367, the short chain dehydrogenase/reductase GME11373, as well as by other oxidoreductases from the cluster, to modify the A and C rings and open the B ring, and finally yield monodictyphenone. The prenyltransferase GME11375 may catalyze the addition reaction between the C5 side chains and the carbon bone of dibenzodioxocinones. The remaining biochemical reactions to the final product dibenzodioxocinones should be methylation catalyzed by methyltransferase GME11366 and reduction and lactonization reaction catalyzed by a series of oxidordeuctases. This Pestalotiopsis microspora protein is O-methyltransferase GME11366.